We begin with the raw amino-acid sequence, 221 residues long: Membrane-bound lytic murein transglycosylase E (221 aa).

The protein belongs to the transglycosylase Slt family.

It catalyses the reaction Exolytic cleavage of the (1-&gt;4)-beta-glycosidic linkage between N-acetylmuramic acid (MurNAc) and N-acetylglucosamine (GlcNAc) residues in peptidoglycan, from either the reducing or the non-reducing ends of the peptidoglycan chains, with concomitant formation of a 1,6-anhydrobond in the MurNAc residue.. Its function is as follows. Murein-degrading enzyme. May play a role in recycling of muropeptides during cell elongation and/or cell division. The polypeptide is Membrane-bound lytic murein transglycosylase E (mltE) (Buchnera aphidicola subsp. Acyrthosiphon pisum (strain APS) (Acyrthosiphon pisum symbiotic bacterium)).